Consider the following 349-residue polypeptide: MSDDYRETDPTRQPEDMGEGSLRPETLADFTGQKASRENLAIFIEAARARNEALDHVLLHGPPGLGKTTLAQIVARELGVGFRATSGPVIQRAGDLAAILTNLQPRDVLFIDEIHRLQPAIEEVLYPAMEDFQLDLIIGEGPAARSVRIDLAPFTLVAATTRAGLLATPLRDRFGIPLRLVFYTPEELRAIVSRGALKLGMRLTDDGAEEIARRSRGTPRIAGRLLRRVRDFALVSKHAVVDRALADAALGRLEVDERGLDAMDRRYLKRIAEHHHGGPVGVETLAAGLAEARDTLEDVIEPYLIQEGLVLRTARGRMLGEAGWRHLGLTPPASQVDLLSSLEQDDSAP.

Over residues 1–15 (MSDDYRETDPTRQPE) the composition is skewed to basic and acidic residues. The disordered stretch occupies residues 1 to 25 (MSDDYRETDPTRQPEDMGEGSLRPE). Positions 1-183 (MSDDYRETDP…FGIPLRLVFY (183 aa)) are large ATPase domain (RuvB-L). ATP-binding positions include L22, R23, G64, K67, T68, T69, 130–132 (EDF), R173, Y183, and R220. T68 provides a ligand contact to Mg(2+). A small ATPAse domain (RuvB-S) region spans residues 184 to 254 (TPEELRAIVS…LADAALGRLE (71 aa)). The segment at 257–349 (ERGLDAMDRR…SSLEQDDSAP (93 aa)) is head domain (RuvB-H). Residues R293, R312, and R317 each coordinate DNA.

It belongs to the RuvB family. In terms of assembly, homohexamer. Forms an RuvA(8)-RuvB(12)-Holliday junction (HJ) complex. HJ DNA is sandwiched between 2 RuvA tetramers; dsDNA enters through RuvA and exits via RuvB. An RuvB hexamer assembles on each DNA strand where it exits the tetramer. Each RuvB hexamer is contacted by two RuvA subunits (via domain III) on 2 adjacent RuvB subunits; this complex drives branch migration. In the full resolvosome a probable DNA-RuvA(4)-RuvB(12)-RuvC(2) complex forms which resolves the HJ.

Its subcellular location is the cytoplasm. The catalysed reaction is ATP + H2O = ADP + phosphate + H(+). Functionally, the RuvA-RuvB-RuvC complex processes Holliday junction (HJ) DNA during genetic recombination and DNA repair, while the RuvA-RuvB complex plays an important role in the rescue of blocked DNA replication forks via replication fork reversal (RFR). RuvA specifically binds to HJ cruciform DNA, conferring on it an open structure. The RuvB hexamer acts as an ATP-dependent pump, pulling dsDNA into and through the RuvAB complex. RuvB forms 2 homohexamers on either side of HJ DNA bound by 1 or 2 RuvA tetramers; 4 subunits per hexamer contact DNA at a time. Coordinated motions by a converter formed by DNA-disengaged RuvB subunits stimulates ATP hydrolysis and nucleotide exchange. Immobilization of the converter enables RuvB to convert the ATP-contained energy into a lever motion, pulling 2 nucleotides of DNA out of the RuvA tetramer per ATP hydrolyzed, thus driving DNA branch migration. The RuvB motors rotate together with the DNA substrate, which together with the progressing nucleotide cycle form the mechanistic basis for DNA recombination by continuous HJ branch migration. Branch migration allows RuvC to scan DNA until it finds its consensus sequence, where it cleaves and resolves cruciform DNA. This Gluconobacter oxydans (strain 621H) (Gluconobacter suboxydans) protein is Holliday junction branch migration complex subunit RuvB.